A 150-amino-acid chain; its full sequence is Truncated transcription factor CAULIFLOWER A (150 aa).

The MADS-box domain occupies 1–61 (MGRGRVEMKR…GKLFEYSSES (61 aa)). The 61-residue stretch at 90 to 150 (QTNWSMEYSR…IRSRKNQLMH (61 aa)) folds into the K-box; partial domain.

As to quaternary structure, homodimer capable of binding to CArG-box sequences. Expressed in some of the meristems of arrest-stage cauliflower heads.

It localises to the nucleus. Functionally, probable transcription factor that promotes early floral meristem identity in synergy with APETALA1, FRUITFULL and LEAFY. Is required subsequently for the transition of an inflorescence meristem into a floral meristem. Seems to be partially redundant to the function of APETALA1. In Brassica oleracea var. botrytis (Cauliflower), this protein is Truncated transcription factor CAULIFLOWER A (CAL-A).